Reading from the N-terminus, the 527-residue chain is Estrogen receptor beta (527 aa).

Positions 1–145 (MDVKNSPSSL…SPSSKRDAHF (145 aa)) are modulating. Residues Ser84 and Ser102 each carry the phosphoserine; by MAPK modification. 2 NR C4-type zinc fingers span residues 146–166 (CAVCSDYASGYHYGVWSCEGC) and 182–206 (CPATNQCTIDKNRRKSCQACRLRKC). The nuclear receptor DNA-binding region spans 146–211 (CAVCSDYASG…RLRKCYEVGM (66 aa)). Residues 261–495 (SPEQLVLTLL…DLLLEMLNAH (235 aa)) form the NR LBD domain. Positions 505 to 527 (TRSERNLAEDSESKEGSQKPQAQ) are disordered. A compositionally biased stretch (basic and acidic residues) spans 506–521 (RSERNLAEDSESKEGS).

It belongs to the nuclear hormone receptor family. NR3 subfamily. As to quaternary structure, binds DNA as a homodimer. Can form a heterodimer with ESR1. Interacts with NCOA1, NCOA3, NCOA5 and NCOA6 coactivators, leading to a strong increase of transcription of target genes. Interacts with UBE1C and AKAP13. Interacts with DNTTIP2. Interacts with CCDC62 in the presence of estradiol/E2; this interaction seems to enhance the transcription of target genes. Interacts with DNAAF4. Interacts with PRMT2. Interacts with CCAR2 (via N-terminus) in a ligand-independent manner. Interacts with RBM39, in the presence of estradiol (E2). Interacts with STUB1/CHIP. In terms of processing, phosphorylation at Ser-84 and Ser-102 recruits NCOA1.

Its subcellular location is the nucleus. In terms of biological role, nuclear hormone receptor. Binds estrogens with an affinity similar to that of ESR1/ER-alpha, and activates expression of reporter genes containing estrogen response elements (ERE) in an estrogen-dependent manner. The protein is Estrogen receptor beta (ESR2) of Ovis aries (Sheep).